The following is a 666-amino-acid chain: MASVFKIHSAYQPAGDQVKAIQNIADSFQKGEKKVTLVGVTGSGKTFTMAQVIQNLGLPTLVLSHNKTLAAQLFREFKEFFPENAVEYFVSYYDYYQPEAYVPSSDTFIEKDSSINEEIDKLRLRATSSLLEREDVVIVSSVSCIYGLGSPEEYTNSVVALKVGDTIERDTVIRKLLHIQYNRNDLDFSRGNFRVRGDSIEIYPAYHTDGIRIEFFGDEIDSISRINPVTAQTIFKLEKAYIYPAKHFITSGPKVKEAVENIRAEVDAQTDFFRKNNKLLEAERILSRTNYDMEMLQEMGYCNGIENYSRHLTGRKPGERPACLIDYFQGEFLLIVDESHVTIPQIGGMFAGDRARKQTLVDFGFRLPSALDNRPLNFQEFETLTPRTLYVSATPAEYEIEKSSKVVEQIIRPTGLLDPIVDVRPTKNQIEDLLVEIRKRIDAGERVLVTTLTKKMSEDLTDYYEEIGLKVAYLHSEVETLDRVGIIRDLRKGIYDVLIGINLLREGLDIPEVSLVAILDADKEGFLRNYKSLIQTIGRAARNVNGTAILYADKTTDSMAKAIEETKRRRKIQEDHNLKFGITPLTIKKEVGDIIEREEKERTSEDLVLEDVEKKFNSKKFPNKEVLKEKLREEMMKAAKELDFERAAILRDKMLSIQTEDSSAKN.

Residues 26-414 form the Helicase ATP-binding domain; the sequence is DSFQKGEKKV…KVVEQIIRPT (389 aa). 39–46 lines the ATP pocket; sequence GVTGSGKT. The Beta-hairpin motif lies at 92–115; that stretch reads YYDYYQPEAYVPSSDTFIEKDSSI. Residues 429–591 enclose the Helicase C-terminal domain; sequence QIEDLLVEIR…ITPLTIKKEV (163 aa). The 36-residue stretch at 625 to 660 folds into the UVR domain; the sequence is EVLKEKLREEMMKAAKELDFERAAILRDKMLSIQTE.

This sequence belongs to the UvrB family. In terms of assembly, forms a heterotetramer with UvrA during the search for lesions. Interacts with UvrC in an incision complex.

The protein localises to the cytoplasm. The UvrABC repair system catalyzes the recognition and processing of DNA lesions. A damage recognition complex composed of 2 UvrA and 2 UvrB subunits scans DNA for abnormalities. Upon binding of the UvrA(2)B(2) complex to a putative damaged site, the DNA wraps around one UvrB monomer. DNA wrap is dependent on ATP binding by UvrB and probably causes local melting of the DNA helix, facilitating insertion of UvrB beta-hairpin between the DNA strands. Then UvrB probes one DNA strand for the presence of a lesion. If a lesion is found the UvrA subunits dissociate and the UvrB-DNA preincision complex is formed. This complex is subsequently bound by UvrC and the second UvrB is released. If no lesion is found, the DNA wraps around the other UvrB subunit that will check the other stand for damage. The chain is UvrABC system protein B from Leptospira interrogans serogroup Icterohaemorrhagiae serovar copenhageni (strain Fiocruz L1-130).